Consider the following 452-residue polypeptide: tRNA modification GTPase MnmE (452 aa).

(6S)-5-formyl-5,6,7,8-tetrahydrofolate contacts are provided by Arg-23, Glu-81, and Lys-120. The TrmE-type G domain occupies 217–373 (GIKTAIIGQT…LVLRINQMYL (157 aa)). Position 227 (Asn-227) interacts with K(+). GTP contacts are provided by residues 227–232 (NVGKSS), 246–252 (TDIPGTT), and 271–274 (DTAG). Residue Ser-231 participates in Mg(2+) binding. Thr-246, Ile-248, and Thr-251 together coordinate K(+). Residue Thr-252 participates in Mg(2+) binding. Lys-452 contributes to the (6S)-5-formyl-5,6,7,8-tetrahydrofolate binding site.

The protein belongs to the TRAFAC class TrmE-Era-EngA-EngB-Septin-like GTPase superfamily. TrmE GTPase family. As to quaternary structure, homodimer. Heterotetramer of two MnmE and two MnmG subunits. It depends on K(+) as a cofactor.

The protein localises to the cytoplasm. In terms of biological role, exhibits a very high intrinsic GTPase hydrolysis rate. Involved in the addition of a carboxymethylaminomethyl (cmnm) group at the wobble position (U34) of certain tRNAs, forming tRNA-cmnm(5)s(2)U34. This is tRNA modification GTPase MnmE from Mycoplasma mycoides subsp. mycoides SC (strain CCUG 32753 / NCTC 10114 / PG1).